Consider the following 335-residue polypeptide: D-alanine--D-alanine ligase (335 aa).

An ATP-grasp domain is found at 124–330 (KMWFSALGVP…FTEYLSDVIS (207 aa)). 154–209 (AFDTWGSVFIKAASQGSSVGCYKVDVRDNIAKVLEEAFGYAPYVVVEKTIKARELE) is a binding site for ATP. The Mg(2+) site is built by aspartate 284, glutamate 297, and asparagine 299.

This sequence belongs to the D-alanine--D-alanine ligase family. Requires Mg(2+) as cofactor. It depends on Mn(2+) as a cofactor.

It localises to the cytoplasm. It catalyses the reaction 2 D-alanine + ATP = D-alanyl-D-alanine + ADP + phosphate + H(+). It participates in cell wall biogenesis; peptidoglycan biosynthesis. Cell wall formation. This Shewanella denitrificans (strain OS217 / ATCC BAA-1090 / DSM 15013) protein is D-alanine--D-alanine ligase.